A 128-amino-acid chain; its full sequence is Fumarate reductase subunit C (128 aa).

3 helical membrane-spanning segments follow: residues 31–51 (ATCIATIWFCLVLLYGVISLG), 67–87 (VVILNIISLAGLLYHAATLYV), and 106–126 (ILKNALWAITGLVSLLALVLV).

It belongs to the FrdC family. In terms of assembly, part of an enzyme complex containing four subunits: a flavoprotein (FrdA), an iron-sulfur protein (FrdB), and two hydrophobic anchor proteins (FrdC and FrdD).

Its subcellular location is the cell inner membrane. Functionally, anchors the catalytic components of the fumarate reductase complex to the cell membrane, binds quinones. This is Fumarate reductase subunit C from Haemophilus ducreyi (strain 35000HP / ATCC 700724).